Here is a 76-residue protein sequence, read N- to C-terminus: Conotoxin ArMLCL-022 (76 aa).

Positions 1-19 (MLCLPVFIILLLLASTAAS) are cleaved as a signal peptide. Residues 20–52 (NPLETRIQSDLIRAALEDADMKTERGFLGVLMK) constitute a propeptide that is removed on maturation.

Belongs to the conotoxin T superfamily. Expressed by the venom duct.

It is found in the secreted. This is Conotoxin ArMLCL-022 from Conus arenatus (Sand-dusted cone).